Reading from the N-terminus, the 669-residue chain is NADH-ubiquinone oxidoreductase chain 5 (669 aa).

14 helical membrane passes run 3-23 (LLIV…GRFL), 40-60 (SILS…CYLR), 76-96 (FLFD…SSLV), 113-133 (FMCY…GDNF), 136-156 (LFLG…FWFT), 217-237 (AISL…AQIG), 250-270 (TPVS…FMIA), 283-303 (LIVI…TGIL), 319-339 (LGYM…FHLM), 340-360 (NHAF…HAMS), 375-395 (FPLT…FPFL), 417-437 (NFAF…SFRL), 461-481 (IPMA…GYLA), and 619-639 (GFVY…VTFF).

Belongs to the complex I subunit 5 family. Complex I is composed of at least 49 different subunits.

The protein resides in the mitochondrion inner membrane. The enzyme catalyses a ubiquinone + NADH + 5 H(+)(in) = a ubiquinol + NAD(+) + 4 H(+)(out). Functionally, core subunit of the mitochondrial membrane respiratory chain NADH dehydrogenase (Complex I) that is believed to belong to the minimal assembly required for catalysis. Complex I functions in the transfer of electrons from NADH to the respiratory chain. The immediate electron acceptor for the enzyme is believed to be ubiquinone. The protein is NADH-ubiquinone oxidoreductase chain 5 (ND5) of Arabidopsis thaliana (Mouse-ear cress).